The sequence spans 536 residues: Arylsulfatase K (536 aa).

The N-terminal stretch at 1–22 (MLLLWVSVVAALALAVLAPGAG) is a signal peptide. 2 residues coordinate Ca(2+): aspartate 40 and cysteine 80. Cysteine 80 (nucleophile) is an active-site residue. Cysteine 80 carries the post-translational modification 3-oxoalanine (Cys). A glycan (N-linked (GlcNAc...) asparagine) is linked at asparagine 108. Lysine 128 is a substrate binding site. N-linked (GlcNAc...) asparagine glycans are attached at residues asparagine 166 and asparagine 193. Position 251 (histidine 251) interacts with substrate. Residue asparagine 262 is glycosylated (N-linked (GlcNAc...) asparagine). Residues aspartate 313 and histidine 314 each coordinate Ca(2+). N-linked (GlcNAc...) asparagine glycans are attached at residues asparagine 375, asparagine 413, and asparagine 498.

Belongs to the sulfatase family. Ca(2+) serves as cofactor. The conversion to 3-oxoalanine (also known as C-formylglycine, FGly), of a serine or cysteine residue in prokaryotes and of a cysteine residue in eukaryotes, is critical for catalytic activity. Post-translationally, the 75-kDa precursor undergoes proteolytic processing to yield a 23 kDa form. In terms of processing, N-glycosylated with both high mannose and complex type sugars. Expressed at high levels in the placenta and pancreas. Expressed at intermediate levels in the lung, brain, heart, liver and kidney and at low levels in the muscle.

It is found in the secreted. It localises to the lysosome. The enzyme catalyses an aryl sulfate + H2O = a phenol + sulfate + H(+). It carries out the reaction Hydrolysis of the 2-sulfate groups of the 2-O-sulfo-D-glucuronate residues of chondroitin sulfate, heparin and heparitin sulfate.. In terms of biological role, catalyzes the hydrolysis of pseudosubstrates such as p-nitrocatechol sulfate and p-nitrophenyl sulfate. Catalyzes the hydrolysis of the 2-sulfate groups of the 2-O-sulfo-D-glucuronate residues of chondroitin sulfate, heparin and heparitin sulfate. Acts selectively on 2-sulfoglucuronate and lacks activity against 2-sulfoiduronate. The sequence is that of Arylsulfatase K (ARSK) from Homo sapiens (Human).